Reading from the N-terminus, the 334-residue chain is Anthranilate phosphoribosyltransferase (334 aa).

5-phospho-alpha-D-ribose 1-diphosphate contacts are provided by residues Gly-79, 82 to 83, Ser-87, 89 to 92, 107 to 115, and Ser-119; these read GD, NIST, and KAGNRSISS. Gly-79 provides a ligand contact to anthranilate. Ser-91 provides a ligand contact to Mg(2+). Asn-110 serves as a coordination point for anthranilate. Arg-165 contacts anthranilate. The Mg(2+) site is built by Asp-224 and Glu-225.

It belongs to the anthranilate phosphoribosyltransferase family. As to quaternary structure, homodimer. Requires Mg(2+) as cofactor.

The enzyme catalyses N-(5-phospho-beta-D-ribosyl)anthranilate + diphosphate = 5-phospho-alpha-D-ribose 1-diphosphate + anthranilate. Its pathway is amino-acid biosynthesis; L-tryptophan biosynthesis; L-tryptophan from chorismate: step 2/5. In terms of biological role, catalyzes the transfer of the phosphoribosyl group of 5-phosphorylribose-1-pyrophosphate (PRPP) to anthranilate to yield N-(5'-phosphoribosyl)-anthranilate (PRA). The polypeptide is Anthranilate phosphoribosyltransferase (Streptococcus thermophilus (strain ATCC BAA-250 / LMG 18311)).